A 147-amino-acid chain; its full sequence is Hemoglobin subunit gamma-1 (147 aa).

Glycine 2 carries the post-translational modification N-acetylglycine. One can recognise a Globin domain in the interval 3–147 (HFTEEDKATI…VASALSSRYH (145 aa)). Phosphothreonine is present on threonine 13. 3 positions are modified to phosphoserine: serine 45, serine 51, and serine 53. Lysine 60 carries the N6-acetyllysine modification. Histidine 64 is a heme b binding site. Lysine 83 carries the post-translational modification N6-acetyllysine. A heme b-binding site is contributed by histidine 93. The residue at position 94 (cysteine 94) is an S-nitrosocysteine. At serine 140 the chain carries Phosphoserine.

The protein belongs to the globin family. In terms of assembly, heterotetramer of two alpha chains and two gamma chains in fetal hemoglobin (Hb F). The ratio of gamma-G to gamma-A chains in is approximately 2:1 in infant chimpanzee, and 1:2 in the adult. As to expression, red blood cells.

Its function is as follows. Gamma chains make up the fetal hemoglobin F, in combination with alpha chains. The polypeptide is Hemoglobin subunit gamma-1 (HBG1) (Pan troglodytes (Chimpanzee)).